The chain runs to 719 residues: MAEVGEDSGARALLALRSAPCSPVLCAAAAAAAFPATTSPPPPAQPPPGPPALPAEPGPGPVPSTVATATTTAPALVAAAAASVRQSPGPALARLEGREFEFLMRQPSVTIGRNSSQGSVDLSMGLSSFISRRHLQLSFQEPHFYLRCLGKNGVFVDGAFQRRGAPALQLPQQCTFRFPSTAIKIQFTSLYHKEEAPASPLRPLYPQISPLKIHIPEPDLRSLVSPIPSPTGTISVPNSCPASPRGAGSSSYRFVQNVTSDLQLAAEFAAKAASEQQADASGGDSPKDESKPPYSYAQLIVQAISSAQDRQLTLSGIYAHITKHYPYYRTADKGWQNSIRHNLSLNRYFIKVPRSQEEPGKGSFWRIDPASEAKLVEQAFRKRRQRGVSCFRTPFGPLSSRSAPASPTHPGLMSPRSSGLQTPECLSREGSPIPHDPDLGSKLASVPEYRYSQSAPGSPVSAQPVIMAVPPRPSNLVAKPVAYMPASIVTSQQPSGHAIHVVQQAPTVTMVRVVTTSANSANGYILASQGSTGTSHDTAGTAVLDLGNEARGLEEKPTIAFATIPAASRVIQTVASQMAPGVPGHTVTILQPATPVTIGQHHLPVRAVTQNGKHAVPTNSLTGNAYALSSPLQLLAAQASSSTPVVITRVCEVGPEEPAAAVSVAANAAPTPAASTTTSASSSGEPEVKRSRVEEPGGTATTQPTAMAATGPQGPGTGE.

Ala2 bears the N-acetylalanine mark. Residues 2–40 (AEVGEDSGARALLALRSAPCSPVLCAAAAAAAFPATTSP) are interaction with SIN3A and SIN3B. The segment at 35–67 (PATTSPPPPAQPPPGPPALPAEPGPGPVPSTVA) is disordered. Over residues 38–62 (TSPPPPAQPPPGPPALPAEPGPGPV) the composition is skewed to pro residues. The segment at 81 to 406 (AASVRQSPGP…PLSSRSAPAS (326 aa)) is required for interaction with FOXO4 and MEF2C. Position 87 is a phosphoserine (Ser87). The FHA domain occupies 109 to 161 (VTIGRNSSQGSVDLSMGLSSFISRRHLQLSFQEPHFYLRCLGKNGVFVDGAFQ). An omega-N-methylarginine mark is found at Arg147 and Arg177. Phosphoserine is present on residues Ser199, Ser209, Ser225, and Ser229. Residues Thr231 and Thr233 each carry the phosphothreonine modification. 4 positions are modified to phosphoserine: Ser239, Ser243, Ser281, and Ser285. Positions 291-386 (KPPYSYAQLI…EQAFRKRRQR (96 aa)) form a DNA-binding region, fork-head. The disordered stretch occupies residues 399-443 (SSRSAPASPTHPGLMSPRSSGLQTPECLSREGSPIPHDPDLGSKL). 2 positions are modified to phosphoserine: Ser402 and Ser406. Thr408 is modified (phosphothreonine). A Phosphoserine modification is found at Ser414. Thr422 is subject to Phosphothreonine. A phosphoserine mark is found at Ser427, Ser431, and Ser445. Over residues 665–685 (AANAAPTPAASTTTSASSSGE) the composition is skewed to low complexity. A disordered region spans residues 665-719 (AANAAPTPAASTTTSASSSGEPEVKRSRVEEPGGTATTQPTAMAATGPQGPGTGE). A compositionally biased stretch (basic and acidic residues) spans 686–695 (PEVKRSRVEE). A compositionally biased stretch (low complexity) spans 696-712 (PGGTATTQPTAMAATGP).

Interacts with SIN3A and SIN3B (via PAH2) to form a complex which represses transcription. Component of SIN3A-, but not SIN3B-, containing multiprotein complexes. Interacts with FOXO4 and MEF2C; both interactions inhibit FOXO4 and MEF2C transactivation activity. Interacts (when phosphorylated) with YWHAE/14-3-3-epsilon; promotes sequestration in the cytoplasm and leads to impaired ability to bind DNA. Interacts with FHL2. Interacts with SRF. Interacts with DVL2 and DVL3; the interaction induces DVL2 nuclear translocation. Interacts with BAP1 (when phosphorylated). Accessory component of the polycomb repressive deubiquitinase (PR-DUB) complex, at least composed of BAP1, one of ASXL1, ASXL2 or (probably) ASXL3 and one of MBD5 or MBD6. The PR-DUB core associates with a number of accessory proteins, including FOXK1, FOXK2, KDM1B, HCFC1 and OGT. Phosphorylation by GSK3 (GSK3A or GSK3B) promotes interaction with YWHAE/14-3-3-epsilon and retention in the cytoplasm. In response to mTORC1 signaling, phosphorylation by GSK3 is prevented, leading to translocation to the nucleus. Expressed in tissues and cells in which the myoglobin gene is transcriptionally active including cardiac and skeletal myocytes, brain and kidney. In the adult brain, expressed in the piriform cortex and the indusium griseum. In the hippocampus, expression is localized to the dentate gyrus and CA3 area. In the cerebellum, expression is confined to the Purkinje cell layer. Present in neuroretinal cells: expressed in rod bipolar cells, amacrine cells and ganglion cells (at protein level).

It is found in the nucleus. Its subcellular location is the cytoplasm. Its function is as follows. Transcriptional regulator involved in different processes such as glucose metabolism, aerobic glycolysis, muscle cell differentiation and autophagy. Recognizes and binds the forkhead DNA sequence motif (5'-GTAAACA-3') and can both act as a transcription activator or repressor, depending on the context. Together with FOXK2, acts as a key regulator of metabolic reprogramming towards aerobic glycolysis, a process in which glucose is converted to lactate in the presence of oxygen. Acts by promoting expression of enzymes for glycolysis (such as hexokinase-2 (HK2), phosphofructokinase, pyruvate kinase (PKLR) and lactate dehydrogenase), while suppressing further oxidation of pyruvate in the mitochondria by up-regulating pyruvate dehydrogenase kinases PDK1 and PDK4. Probably plays a role in gluconeogenesis during overnight fasting, when lactate from white adipose tissue and muscle is the main substrate. Involved in mTORC1-mediated metabolic reprogramming: in response to mTORC1 signaling, translocates into the nucleus and regulates the expression of genes associated with glycolysis and downstream anabolic pathways, such as HIF1A, thereby regulating glucose metabolism. Together with FOXK2, acts as a negative regulator of autophagy in skeletal muscle: in response to starvation, enters the nucleus, binds the promoters of autophagy genes and represses their expression, preventing proteolysis of skeletal muscle proteins. Acts as a transcriptional regulator of the myogenic progenitor cell population in skeletal muscle. Binds to the upstream enhancer region (CCAC box) of myoglobin (MB) gene, regulating the myogenic progenitor cell population. Promotes muscle progenitor cell proliferation by repressing the transcriptional activity of FOXO4, thereby inhibiting myogenic differentiation. Involved in remodeling processes of adult muscles that occur in response to physiological stimuli. Required to correct temporal orchestration of molecular and cellular events necessary for muscle repair. Represses myogenic differentiation by inhibiting MEFC activity. Positively regulates Wnt/beta-catenin signaling by translocating DVL into the nucleus. Reduces virus replication, probably by binding the interferon stimulated response element (ISRE) to promote antiviral gene expression. Accessory component of the polycomb repressive deubiquitinase (PR-DUB) complex; recruits the PR-DUB complex to specific FOXK1-bound genes. This is Forkhead box protein K1 from Mus musculus (Mouse).